The primary structure comprises 104 residues: ATP-dependent Clp protease adapter protein ClpS (104 aa).

It belongs to the ClpS family. As to quaternary structure, binds to the N-terminal domain of the chaperone ClpA.

In terms of biological role, involved in the modulation of the specificity of the ClpAP-mediated ATP-dependent protein degradation. This chain is ATP-dependent Clp protease adapter protein ClpS, found in Paraburkholderia phymatum (strain DSM 17167 / CIP 108236 / LMG 21445 / STM815) (Burkholderia phymatum).